A 327-amino-acid chain; its full sequence is Trypsin-like protease try-5 (327 aa).

The N-terminal stretch at 1–21 (MRPRIIVFLFQVLVVIKGTKL) is a signal peptide. A Peptidase S1 domain is found at 43-327 (AAGNTGNPTH…KFIVNFINQA (285 aa)). Cysteine 73 and cysteine 89 are oxidised to a cystine. Catalysis depends on charge relay system residues histidine 88 and aspartate 173. Asparagine 207 is a glycosylation site (N-linked (GlcNAc...) asparagine). Disulfide bonds link cysteine 242–cysteine 256 and cysteine 266–cysteine 296. The active-site Charge relay system is serine 270.

The protein belongs to the peptidase S1 family. In terms of tissue distribution, specifically expressed in the male gonad including the seminal vesicle, the valve region and the vas deferens.

The protein localises to the secreted. Its subcellular location is the cytoplasmic vesicle. It localises to the secretory vesicle lumen. Its activity is regulated as follows. In the male gonad, probably maintained inactive by swm-1. Serine protease which, in males, acts as a promoting signal during mating to activate sperm. The chain is Trypsin-like protease try-5 from Caenorhabditis elegans.